The primary structure comprises 419 residues: DNA-directed RNA polymerase I subunit RPA49 (419 aa).

2 positions are modified to phosphoserine: Ser35 and Ser163. Lys373 carries the post-translational modification N6-acetyllysine. Residues 397-419 (GTLSLPLPPAQTSDRLAKRRKIT) are disordered.

Belongs to the eukaryotic RPA49/POLR1E RNA polymerase subunit family. In terms of assembly, component of the RNA polymerase I (Pol I) complex consisting of 13 subunits: a ten-subunit catalytic core composed of POLR1A/RPA1, POLR1B/RPA2, POLR1C/RPAC1, POLR1D/RPAC2, POLR1H/RPA12, POLR2E/RPABC1, POLR2F/RPABC2, POLR2H/RPABC3, POLR2K/RPABC4 and POLR2L/RPABC5; a mobile stalk subunit POLR1F/RPA43 protruding from the core and additional subunits homologous to general transcription factors POLR1E/RPA49 and POLR1G/RPA34. Forms a heterodimer with POLR1G/RPA34. Interacts with POLR1G. Also binds UBTF/UBF. Interacts with PWP1. Post-translationally, acetylated at Lys-373 by CREBBP/CBP, leading to decreased RNA polymerase I transcription. In normal conditions, deacetylated by SIRT7, promoting the association of RNA polymerase I with the rDNA promoter region and coding region. In response to stress, SIRT7 is released from nucleoli leading to hyperacetylation of POLR1E/PAF53 and decreased association of RNA polymerase I with the rDNA promoter region.

The protein localises to the nucleus. It is found in the nucleolus. Component of RNA polymerase I (Pol I), a DNA-dependent RNA polymerase which synthesizes ribosomal RNA precursors using the four ribonucleoside triphosphates as substrates. Appears to be involved in the formation of the initiation complex at the promoter by mediating the interaction between Pol I and UBTF/UBF. The sequence is that of DNA-directed RNA polymerase I subunit RPA49 (POLR1E) from Homo sapiens (Human).